We begin with the raw amino-acid sequence, 235 residues long: Probable transcriptional regulatory protein Ccon26_04940 (235 aa).

This sequence belongs to the TACO1 family.

The protein resides in the cytoplasm. The polypeptide is Probable transcriptional regulatory protein Ccon26_04940 (Campylobacter concisus (strain 13826)).